Consider the following 293-residue polypeptide: Exosome complex component RRP4 (293 aa).

The S1 motif domain occupies 79 to 159; it reads EVGDIVVGRI…SDGAVSLHTR (81 aa). A Phosphoserine modification is found at Ser-124.

Belongs to the RRP4 family. In terms of assembly, component of the RNA exosome core complex (Exo-9), composed of EXOSC1, EXOSC2, EXOSC3, EXOSC4, EXOSC5, EXOSC6, EXOSC7, EXOSC8 and EXOSC9; within the complex interacts with EXOSC4 and EXOSC7. The catalytically inactive RNA exosome core complex (Exo-9) associates with the catalytic subunit EXOSC10/RRP6. Exo-9 may associate with DIS3 to form the nucleolar exosome complex, or DIS3L to form the cytoplasmic exosome complex. Exo-9 is formed by a hexameric base ring consisting of the heterodimers EXOSC4-EXOSC9, EXOSC5-EXOSC8 and EXOSC6-EXOSC7, and a cap ring consisting of EXOSC1, EXOSC2 and EXOSC3. The RNA exosome complex associates with cofactors C1D/RRP47, MPHOSPH6/MPP6 and MTREX/MTR4. Interacts with GTPBP1. Interacts with ZFP36L1 (via N-terminus).

The protein resides in the cytoplasm. It is found in the nucleus. It localises to the nucleolus. In terms of biological role, non-catalytic component of the RNA exosome complex which has 3'-&gt;5' exoribonuclease activity and participates in a multitude of cellular RNA processing and degradation events. In the nucleus, the RNA exosome complex is involved in proper maturation of stable RNA species such as rRNA, snRNA and snoRNA, in the elimination of RNA processing by-products and non-coding 'pervasive' transcripts, such as antisense RNA species and promoter-upstream transcripts (PROMPTs), and of mRNAs with processing defects, thereby limiting or excluding their export to the cytoplasm. The RNA exosome may be involved in Ig class switch recombination (CSR) and/or Ig variable region somatic hypermutation (SHM) by targeting AICDA deamination activity to transcribed dsDNA substrates. In the cytoplasm, the RNA exosome complex is involved in general mRNA turnover and specifically degrades inherently unstable mRNAs containing AU-rich elements (AREs) within their 3' untranslated regions, and in RNA surveillance pathways, preventing translation of aberrant mRNAs. It seems to be involved in degradation of histone mRNA. The catalytic inactive RNA exosome core complex of 9 subunits (Exo-9) is proposed to play a pivotal role in the binding and presentation of RNA for ribonucleolysis, and to serve as a scaffold for the association with catalytic subunits and accessory proteins or complexes. EXOSC2 as peripheral part of the Exo-9 complex stabilizes the hexameric ring of RNase PH-domain subunits through contacts with EXOSC4 and EXOSC7. This chain is Exosome complex component RRP4, found in Homo sapiens (Human).